The primary structure comprises 1705 residues: Rho guanine nucleotide exchange factor 28 (1705 aa).

Disordered regions lie at residues 287–316 (RPEE…SAAE) and 473–524 (KKRS…ETNT). Phosphoserine occurs at positions 313 and 478. Residues 501–510 (PGSQSSSRTG) show a composition bias toward polar residues. S624 is modified (phosphoserine). Residues 630-649 (MTSPRNKSKTKSKDAKDKEK) form a disordered region. Residues 640–649 (KSKDAKDKEK) show a composition bias toward basic and acidic residues. Residues 652–699 (RHQFAPGTFSGVLQCLVCDKTLLGKESLQCSNCNANVHKGCKDAAPAC) form a Phorbol-ester/DAG-type zinc finger. Polar residues-rich tracts occupy residues 710 to 721 (NKPQTILGNSSF) and 759 to 775 (VPGT…TSLE). The interval 710 to 800 (NKPQTILGNS…ELLQSMGSSP (91 aa)) is disordered. The segment covering 777–791 (ESDHNSCRSRSHSDE) has biased composition (basic and acidic residues). The DH domain occupies 849-1044 (KRQDVIFELM…KDMIATVDLK (196 aa)). The PH domain maps to 1086–1188 (TLLYDGLVYW…WMRRIQQAVE (103 aa)). The segment at 1187-1207 (VESCPEEKGGRTSESDEDKRK) is disordered. Over residues 1191–1207 (PEEKGGRTSESDEDKRK) the composition is skewed to basic and acidic residues. Residues 1295 to 1304 (AVSQSCEDSC) are interaction with PTK2/FAK1; required for regulation of axonal branching and synapse formation. The disordered stretch occupies residues 1312 to 1339 (TLSSHDVPGSPTASLVTGGREGRGCSDV). The interval 1372–1383 (IIQAIQNLTRLL) is mediates cytoplasmic retention and interaction with YWHAH. Positions 1425-1705 (QKSRDADRQH…DGAKENIVYL (281 aa)) are interaction with microtubules. Residues 1488–1525 (RSRGELDLQLQEYQHSLERLREGQRLVEREQARMRAQQ) are a coiled coil. The RNA-binding stretch occupies residues 1496–1527 (QLQEYQHSLERLREGQRLVEREQARMRAQQSL). The residue at position 1538 (S1538) is a Phosphoserine. A mediates cytoplasmic retention and interaction with MAPK8IP1 region spans residues 1566–1579 (FINEALVQMSFNTF). The disordered stretch occupies residues 1638–1705 (PFHESSKDSC…DGAKENIVYL (68 aa)). Basic and acidic residues predominate over residues 1641-1655 (ESSKDSCKNDLDTSH). Residues 1656–1669 (TESPTPHDSNSHRP) are compositionally biased toward polar residues. A compositionally biased stretch (basic and acidic residues) spans 1688 to 1699 (TRQDGETGDGAK).

As to quaternary structure, homooligomer; forms cytoplasmic aggregates. Forms a complex with MAPK8 and MAPK8IP1. Interacts with RHOA. Interacts with microtubules. Interacts with YWHAE and YWHAH. Interacts with PTK2/FAK1. Interacts with NEFL. Interacts with CTNND2; prevents interaction with RHOA. Post-translationally, phosphorylated on tyrosine upon stimulation of cells by laminin.

The protein localises to the cytoplasm. It is found in the cell membrane. Functionally, functions as a RHOA-specific guanine nucleotide exchange factor regulating signaling pathways downstream of integrins and growth factor receptors. Functions in axonal branching, synapse formation and dendritic morphogenesis. Also functions in focal adhesion formation, cell motility and B-lymphocytes activation. May regulate NEFL expression and aggregation and play a role in apoptosis. The sequence is that of Rho guanine nucleotide exchange factor 28 (ARHGEF28) from Homo sapiens (Human).